The primary structure comprises 316 residues: 4-hydroxy-3-methylbut-2-enyl diphosphate reductase (316 aa).

A [4Fe-4S] cluster-binding site is contributed by C12. Residues H41 and H74 each coordinate (2E)-4-hydroxy-3-methylbut-2-enyl diphosphate. Dimethylallyl diphosphate contacts are provided by H41 and H74. H41 and H74 together coordinate isopentenyl diphosphate. Position 96 (C96) interacts with [4Fe-4S] cluster. (2E)-4-hydroxy-3-methylbut-2-enyl diphosphate is bound at residue H124. H124 is a dimethylallyl diphosphate binding site. H124 contacts isopentenyl diphosphate. Residue E126 is the Proton donor of the active site. T168 is a (2E)-4-hydroxy-3-methylbut-2-enyl diphosphate binding site. C198 contacts [4Fe-4S] cluster. The (2E)-4-hydroxy-3-methylbut-2-enyl diphosphate site is built by S226, S227, N228, and S270. The dimethylallyl diphosphate site is built by S226, S227, N228, and S270. The isopentenyl diphosphate site is built by S226, S227, N228, and S270.

Belongs to the IspH family. The cofactor is [4Fe-4S] cluster.

It catalyses the reaction isopentenyl diphosphate + 2 oxidized [2Fe-2S]-[ferredoxin] + H2O = (2E)-4-hydroxy-3-methylbut-2-enyl diphosphate + 2 reduced [2Fe-2S]-[ferredoxin] + 2 H(+). It carries out the reaction dimethylallyl diphosphate + 2 oxidized [2Fe-2S]-[ferredoxin] + H2O = (2E)-4-hydroxy-3-methylbut-2-enyl diphosphate + 2 reduced [2Fe-2S]-[ferredoxin] + 2 H(+). It functions in the pathway isoprenoid biosynthesis; dimethylallyl diphosphate biosynthesis; dimethylallyl diphosphate from (2E)-4-hydroxy-3-methylbutenyl diphosphate: step 1/1. The protein operates within isoprenoid biosynthesis; isopentenyl diphosphate biosynthesis via DXP pathway; isopentenyl diphosphate from 1-deoxy-D-xylulose 5-phosphate: step 6/6. Catalyzes the conversion of 1-hydroxy-2-methyl-2-(E)-butenyl 4-diphosphate (HMBPP) into a mixture of isopentenyl diphosphate (IPP) and dimethylallyl diphosphate (DMAPP). Acts in the terminal step of the DOXP/MEP pathway for isoprenoid precursor biosynthesis. This Acinetobacter baumannii (strain AB307-0294) protein is 4-hydroxy-3-methylbut-2-enyl diphosphate reductase.